Here is a 55-residue protein sequence, read N- to C-terminus: Small integral membrane protein 11 (55 aa).

Residues 9–29 (VPLLLYILAAKTLILCLAFAG) form a helical membrane-spanning segment. Residues 34 to 54 (QRRSLEGKLQAEKRKQSEKKA) are a coiled coil.

Expressed in brain, heart, kidney, thymus, liver, stomach, muscle, lung, testis, ovary, skin and eye.

Its subcellular location is the membrane. In Mus musculus (Mouse), this protein is Small integral membrane protein 11.